We begin with the raw amino-acid sequence, 892 residues long: Leucine--tRNA ligase (892 aa).

A 'HIGH' region motif is present at residues 42–52 (PYPSGKLHMGH). The 'KMSKS' region motif lies at 640 to 644 (TMSKS). Lys-643 provides a ligand contact to ATP.

Belongs to the class-I aminoacyl-tRNA synthetase family.

The protein resides in the cytoplasm. The catalysed reaction is tRNA(Leu) + L-leucine + ATP = L-leucyl-tRNA(Leu) + AMP + diphosphate. This Albidiferax ferrireducens (strain ATCC BAA-621 / DSM 15236 / T118) (Rhodoferax ferrireducens) protein is Leucine--tRNA ligase.